A 328-amino-acid chain; its full sequence is Stress response kinase A (328 aa).

The Proton acceptor role is filled by D201. Mg(2+) contacts are provided by N206 and D217. D217 is a catalytic residue.

Belongs to the SrkA/RdoA protein kinase family. Monomer. Mg(2+) is required as a cofactor.

It is found in the cytoplasm. The catalysed reaction is L-seryl-[protein] + ATP = O-phospho-L-seryl-[protein] + ADP + H(+). The enzyme catalyses L-threonyl-[protein] + ATP = O-phospho-L-threonyl-[protein] + ADP + H(+). Functionally, a protein kinase that phosphorylates Ser and Thr residues. Probably acts to suppress the effects of stress linked to accumulation of reactive oxygen species. Probably involved in the extracytoplasmic stress response. This is Stress response kinase A from Escherichia coli O157:H7.